We begin with the raw amino-acid sequence, 354 residues long: Protein angel (354 aa).

A disordered region spans residues 22–59 (VSSQAKGASGKRKQKAKEMESSHDRNRRWTSLGNQAEG).

It belongs to the CCR4/nocturin family. Ubiquitously expressed in embryos.

The sequence is that of Protein angel (angel) from Drosophila melanogaster (Fruit fly).